Consider the following 238-residue polypeptide: 1-(5-phosphoribosyl)-5-[(5-phosphoribosylamino)methylideneamino] imidazole-4-carboxamide isomerase (238 aa).

The Proton acceptor role is filled by D8. D129 acts as the Proton donor in catalysis.

Belongs to the HisA/HisF family.

The protein resides in the cytoplasm. It catalyses the reaction 1-(5-phospho-beta-D-ribosyl)-5-[(5-phospho-beta-D-ribosylamino)methylideneamino]imidazole-4-carboxamide = 5-[(5-phospho-1-deoxy-D-ribulos-1-ylimino)methylamino]-1-(5-phospho-beta-D-ribosyl)imidazole-4-carboxamide. It participates in amino-acid biosynthesis; L-histidine biosynthesis; L-histidine from 5-phospho-alpha-D-ribose 1-diphosphate: step 4/9. The sequence is that of 1-(5-phosphoribosyl)-5-[(5-phosphoribosylamino)methylideneamino] imidazole-4-carboxamide isomerase from Myxococcus xanthus (strain DK1622).